Reading from the N-terminus, the 219-residue chain is Tegument protein UL14 (219 aa).

The interval 159–219 is disordered; sequence VHTDAPSRPG…GFARDCPDGE (61 aa). Over residues 186–202 the composition is skewed to pro residues; the sequence is APPPETAPSPEPAPGPA.

Belongs to the alphaherpesvirinae HHV-1 UL14 protein family. Post-translationally, phosphorylated.

It localises to the virion tegument. The protein localises to the host cytoplasm. The protein resides in the host nucleus. Contributes to the nuclear transport of the viral transcriptional activator VP16 during the early phase of infection. Therefore, participates indirectly in the regulation of the immediate-early gene expression. Additionally, seems to be important for efficient nuclear targeting of capsids. The chain is Tegument protein UL14 from Human herpesvirus 2 (strain HG52) (HHV-2).